Reading from the N-terminus, the 349-residue chain is Cyclic amide hydrolase (349 aa).

The interval 1–90 is RU A; sequence MTSPEDTAGV…AVFVDDPASS (90 aa). Arg-38 is a substrate binding site. The RU B stretch occupies residues 99-231; it reads GLSIGVTTTA…AAVLVMGNSP (133 aa). Lys-149 is an active-site residue. Residues Arg-176, 214–215, Lys-311, and 330–331 each bind substrate; these read SA and SG. Ser-214 serves as the catalytic Nucleophile. Positions 237 to 349 are RU C; sequence YRIGHGVLRD…GGGTVAVIAR (113 aa).

It belongs to the cyclic amide hydrolase (CyAH) family. In terms of assembly, homotetramer.

Its function is as follows. Cyclic amide hydrolase of unknown substrate specificity. Catalyzes the hydrolytic ring-opening of a cyclic amide. Does not act on cyanuric acid nor barbituric acid. The sequence is that of Cyclic amide hydrolase from Rhodococcus sp.